The chain runs to 175 residues: Tumor necrosis factor receptor superfamily member 13C (175 aa).

Topologically, residues 1-71 are extracellular; it reads MGARRLRVRS…EGSALRPDVA (71 aa). The stretch at 21 to 38 is one TNFR-Cys; truncated repeat; that stretch reads QCNQTECFDPLVRNCVSC. Disulfide bonds link Cys22–Cys35 and Cys27–Cys38. N-linked (GlcNAc...) asparagine glycosylation occurs at Asn23. Residues 29 to 34 form an essential for TNFSF13B/TALL1/BAFF/BLyS binding region; the sequence is DPLVRN. Residues 72–92 form a helical; Signal-anchor for type III membrane protein membrane-spanning segment; it reads LLVGAPALLGLILALTLVGLV. Topologically, residues 93–175 are cytoplasmic; it reads SLVSWRWRQQ…VTTKTAGPEQ (83 aa). Positions 124–175 are disordered; the sequence is VPSSETPHASAPTWPPLKEDADSALPRHSVPVPATELGSTELVTTKTAGPEQ. Residues 160–175 are compositionally biased toward polar residues; it reads LGSTELVTTKTAGPEQ.

Highly expressed in spleen and testis; detected at lower levels in lung and thymus.

Its subcellular location is the membrane. In terms of biological role, B-cell receptor specific for TNFSF13B/TALL1/BAFF/BLyS. Promotes the survival of mature B-cells and the B-cell response. In Mus musculus (Mouse), this protein is Tumor necrosis factor receptor superfamily member 13C (Tnfrsf13c).